A 644-amino-acid polypeptide reads, in one-letter code: Sodium/hydrogen exchanger 9 (644 aa).

The Lumenal portion of the chain corresponds to 1 to 20 (MERQRRFMSEKDEYQFQHQG). Residues 21–41 (AVELLVFNFLLILTILTIWLF) form a helical membrane-spanning segment. At 42 to 45 (KNHR) the chain is on the cytoplasmic side. Residues 46 to 66 (FRFLHETGGAMVYGLIMGLIL) traverse the membrane as a helical segment. Over 67–126 (RYATAPTDIESGTVYDCGKLAFSPSTLLINITDQVYEYKYKREISQHNINPHLGNAILEK) the chain is Lumenal. Residues 127–147 (MTFDPEIFFNVLLPPIIFHAG) form a helical membrane-spanning segment. At 148 to 164 (YSLKKRHFFQNLGSILT) the chain is on the cytoplasmic side. A helical transmembrane segment spans residues 165-185 (YAFLGTAISCIVIGLIMYGFV). Residues 186-203 (KAMVYAGQLKNGDFHFTD) lie on the Lumenal side of the membrane. The chain crosses the membrane as a helical span at residues 204-224 (CLFFGSLMSATDPVTVLAIFH). Residues 225–235 (ELHVDPDLYTL) are Cytoplasmic-facing. Residues 236 to 256 (LFGESVLNDAVAIVLTYSISI) form a helical membrane-spanning segment. Residues 257–277 (YSPKENPNAFDAAAFFQSVGN) are Lumenal-facing. A helical transmembrane segment spans residues 278-298 (FLGIFAGSFAMGSAYAVVTAL). Residues 299–301 (LTK) lie on the Cytoplasmic side of the membrane. The next 2 membrane-spanning stretches (helical) occupy residues 302 to 322 (FTKL…LSWS) and 323 to 343 (AFLS…FCGV). The Cytoplasmic segment spans residues 344–364 (TQAHYTYNNLSLDSKMRTKQL). The helical transmembrane segment at 365 to 385 (FEFMNFLAENVIFCYMGLALF) threads the bilayer. A topological domain (lumenal) is located at residue T386. A helical membrane pass occupies residues 387–407 (FQNHIFNALFILGAFLAIFVA). Residues 408–429 (RACNIYPLSFLLNLGRKHKIPW) are Cytoplasmic-facing. The helical transmembrane segment at 430–450 (NFQHMMMFSGLRGAIAFALAI) threads the bilayer. Residues 451 to 465 (RDTESQPKQMMFSTT) lie on the Lumenal side of the membrane. The chain crosses the membrane as a helical span at residues 466–486 (LLLVFFTVWVFGGGTTPMLTW). Over 487–644 (LQIRVGVDLD…EQTPGQSQLN (158 aa)) the chain is Cytoplasmic. The interval 593–622 (QAASPCSPPTRLGLDQKAAPQTPGKENIYE) is disordered.

This sequence belongs to the monovalent cation:proton antiporter 1 (CPA1) transporter (TC 2.A.36) family. As to quaternary structure, homodimer; phosphatidylinositol-4,5-bisphosphate (PIP2) and phosphatidylinositol 3,4,5-trisphosphate (PIP3) could be involved in the dimer stabilization. Interacts (via the C-terminus) with RACK1. Interacts with CHP1.

Its subcellular location is the late endosome membrane. It localises to the early endosome membrane. It is found in the recycling endosome membrane. The protein resides in the cell membrane. The protein localises to the cytoplasmic vesicle. Its subcellular location is the phagosome membrane. It carries out the reaction Na(+)(in) + H(+)(out) = Na(+)(out) + H(+)(in). It catalyses the reaction K(+)(in) + H(+)(out) = K(+)(out) + H(+)(in). In terms of biological role, endosomal Na(+), K(+)/H(+) antiporter. Mediates the electroneutral exchange of endosomal luminal H(+) for a cytosolic Na(+) or K(+). By facilitating proton efflux, SLC9A9 counteracts the acidity generated by vacuolar (V)-ATPase, thereby limiting luminal acidification. Regulates organellar pH and consequently, endosome maturation and endocytic trafficking of plasma membrane receptors and neurotransporters. Promotes the recycling of transferrin receptors back to the cell surface to facilitate additional iron uptake in the brain. Regulates synaptic transmission by regulating the luminal pH of axonal endosomes. Regulates phagosome lumenal pH, thus affecting phagosome maturation, and consequently, microbicidal activity in macrophages. Can also be active at the cell surface of specialized cells, e.g., in the inner ear hair bundles uses the high K(+) of the endolymph to regulate intracelular pH. This chain is Sodium/hydrogen exchanger 9 (SLC9A9), found in Equus caballus (Horse).